An 81-amino-acid polypeptide reads, in one-letter code: Putative defensin-like protein 56 (81 aa).

A signal peptide spans 1–23 (MNITKAYVIFFLVVILTNSLSNS). Disulfide bonds link C46-C80, C50-C73, C59-C78, and C63-C79.

Belongs to the DEFL family.

It localises to the secreted. In Arabidopsis thaliana (Mouse-ear cress), this protein is Putative defensin-like protein 56.